The following is a 248-amino-acid chain: UDP-2,3-diacylglucosamine hydrolase (248 aa).

Mn(2+) contacts are provided by Asp8, His10, Asp41, Asn79, and His114. 79–80 (NR) is a binding site for substrate. Residues Asp122, Ser160, Asp171, Gln174, and His202 each contribute to the substrate site. Residues His202 and His204 each coordinate Mn(2+).

The protein belongs to the LpxH family. Mn(2+) is required as a cofactor.

The protein localises to the cell inner membrane. It catalyses the reaction UDP-2-N,3-O-bis[(3R)-3-hydroxytetradecanoyl]-alpha-D-glucosamine + H2O = 2-N,3-O-bis[(3R)-3-hydroxytetradecanoyl]-alpha-D-glucosaminyl 1-phosphate + UMP + 2 H(+). The protein operates within glycolipid biosynthesis; lipid IV(A) biosynthesis; lipid IV(A) from (3R)-3-hydroxytetradecanoyl-[acyl-carrier-protein] and UDP-N-acetyl-alpha-D-glucosamine: step 4/6. Functionally, hydrolyzes the pyrophosphate bond of UDP-2,3-diacylglucosamine to yield 2,3-diacylglucosamine 1-phosphate (lipid X) and UMP by catalyzing the attack of water at the alpha-P atom. Involved in the biosynthesis of lipid A, a phosphorylated glycolipid that anchors the lipopolysaccharide to the outer membrane of the cell. This Stenotrophomonas maltophilia (strain K279a) protein is UDP-2,3-diacylglucosamine hydrolase.